Reading from the N-terminus, the 701-residue chain is Polyribonucleotide nucleotidyltransferase (701 aa).

2 residues coordinate Mg(2+): Asp-483 and Asp-489. Residues 550–609 enclose the KH domain; sequence PRIYTLHIPTDKIRDVIGPGGKVIRGIIEQTGVKIDVEDDGTIHVASADEASANKAIQII. Residues 619–686 form the S1 motif domain; the sequence is GKTYLGKVVR…EGNKIKLSRK (68 aa).

Belongs to the polyribonucleotide nucleotidyltransferase family. Requires Mg(2+) as cofactor.

The protein localises to the cytoplasm. It carries out the reaction RNA(n+1) + phosphate = RNA(n) + a ribonucleoside 5'-diphosphate. In terms of biological role, involved in mRNA degradation. Catalyzes the phosphorolysis of single-stranded polyribonucleotides processively in the 3'- to 5'-direction. The polypeptide is Polyribonucleotide nucleotidyltransferase (Solibacter usitatus (strain Ellin6076)).